The sequence spans 429 residues: Adenylosuccinate synthetase (429 aa).

Residues 12–18 and 40–42 contribute to the GTP site; these read GDEGKGK and GHT. The active-site Proton acceptor is the aspartate 13. The Mg(2+) site is built by aspartate 13 and glycine 40. Residues 13–16, 38–41, threonine 128, arginine 142, glutamine 223, threonine 238, and arginine 302 contribute to the IMP site; these read DEGK and NAGH. Residue histidine 41 is the Proton donor of the active site. 298–304 serves as a coordination point for substrate; the sequence is VNTGRPR. GTP contacts are provided by residues arginine 304, 330–332, and 412–414; these read KLD and GVG.

The protein belongs to the adenylosuccinate synthetase family. Homodimer. The cofactor is Mg(2+).

It localises to the cytoplasm. It catalyses the reaction IMP + L-aspartate + GTP = N(6)-(1,2-dicarboxyethyl)-AMP + GDP + phosphate + 2 H(+). It participates in purine metabolism; AMP biosynthesis via de novo pathway; AMP from IMP: step 1/2. Its function is as follows. Plays an important role in the de novo pathway of purine nucleotide biosynthesis. Catalyzes the first committed step in the biosynthesis of AMP from IMP. The protein is Adenylosuccinate synthetase of Kocuria rhizophila (strain ATCC 9341 / DSM 348 / NBRC 103217 / DC2201).